Here is a 463-residue protein sequence, read N- to C-terminus: L-seryl-tRNA(Sec) selenium transferase (463 aa).

At Lys295 the chain carries N6-(pyridoxal phosphate)lysine.

This sequence belongs to the SelA family. In terms of assembly, homodecamer; pentamer of dimers. Binds only one seryl-tRNA(Sec) per dimer. Pyridoxal 5'-phosphate serves as cofactor.

The protein localises to the cytoplasm. The catalysed reaction is L-seryl-tRNA(Sec) + selenophosphate + H(+) = L-selenocysteinyl-tRNA(Sec) + phosphate. The protein operates within aminoacyl-tRNA biosynthesis; selenocysteinyl-tRNA(Sec) biosynthesis; selenocysteinyl-tRNA(Sec) from L-seryl-tRNA(Sec) (bacterial route): step 1/1. Converts seryl-tRNA(Sec) to selenocysteinyl-tRNA(Sec) required for selenoprotein biosynthesis. The polypeptide is L-seryl-tRNA(Sec) selenium transferase (Edwardsiella ictaluri (strain 93-146)).